We begin with the raw amino-acid sequence, 501 residues long: CUGBP Elav-like family member 1 (501 aa).

Positions 2-196 are binds strongly to URE; the sequence is NGSLDHPDQP…DTQKDKEQKR (195 aa). RRM domains are found at residues 16-99 and 108-188; these read IKMF…PADS and RKLF…FADT. Composition is skewed to low complexity over residues 274–298 and 312–323; these read PTGS…TPSG and SSPTSSTSSSVN. A disordered region spans residues 274–323; the sequence is PTGSSALTTSSSPLSVLTSSGTPSGQPAQSAWDAYKAGSSPTSSTSSSVN. Residues 397–501 are binds strongly to URE; sequence LLSQQNVSAA…KRSKNDSKPY (105 aa). Positions 416-494 constitute an RRM 3 domain; sequence ANLFIYHLPQ…KRLKVQLKRS (79 aa).

This sequence belongs to the CELF/BRUNOL family.

It localises to the nucleus. Its subcellular location is the cytoplasm. In terms of biological role, RNA-binding protein implicated in the regulation of several post-transcriptional events. May be involved in mRNA translation activation and stability. Involved in the regulation of muscle-specific splicing of alpha actinin pre-mRNAs via the binding to the UR-repeat element (URE) at the branch point of the non-muscle (NM) exon. The chain is CUGBP Elav-like family member 1 (celf1) from Danio rerio (Zebrafish).